Reading from the N-terminus, the 108-residue chain is Large ribosomal subunit protein eL32 (108 aa).

Positions 21–30 are enriched in basic residues; that stretch reads RRPRGRTSKM. The interval 21–44 is disordered; sequence RRPRGRTSKMRRYEKGKPAMPAIG.

It belongs to the eukaryotic ribosomal protein eL32 family.

The protein is Large ribosomal subunit protein eL32 (rpl32e) of Methanothermobacter thermautotrophicus (strain ATCC 29096 / DSM 1053 / JCM 10044 / NBRC 100330 / Delta H) (Methanobacterium thermoautotrophicum).